The primary structure comprises 275 residues: Coagulation factor IX (275 aa).

At Y23 the chain carries Sulfotyrosine. An N-linked (GlcNAc...) asparagine glycan is attached at N25. The residue at position 27 (T27) is a Phosphothreonine. N-linked (GlcNAc...) asparagine glycosylation is present at N35. T47 carries O-linked (GalNAc...) threonine glycosylation. In terms of domain architecture, Peptidase S1 spans 49-275; it reads IVGGENAKPG…YTRVSWYVNW (227 aa). Cysteines 74 and 90 form a disulfide. Residue H89 is the Charge relay system of the active site. N-linked (GlcNAc...) asparagine glycosylation is present at N96. Residues E103, N105, E108, E110, and E113 each coordinate Ca(2+). N-linked (GlcNAc...) asparagine glycosylation occurs at N128. The active-site Charge relay system is the D137. 2 disulfides stabilise this stretch: C204/C218 and C229/C257. Residue S233 is the Charge relay system of the active site.

Belongs to the peptidase S1 family. As to quaternary structure, heterodimer of a light chain and a heavy chain; disulfide-linked. Interacts (inactive and activated) with F11 (activated) in calcium-dependent manner. Interacts with SERPINC1. In terms of processing, activated by factor XIa, which excises the activation peptide. The propeptide can also be removed by snake venom protease. Activated by coagulation factor VIIa-tissue factor (F7-F3) complex in calcium-dependent manner.

Its subcellular location is the secreted. The enzyme catalyses Selective cleavage of Arg-|-Ile bond in factor X to form factor Xa.. Functionally, factor IX is a vitamin K-dependent plasma protein that participates in the intrinsic pathway of blood coagulation by converting factor X to its active form in the presence of Ca(2+) ions, phospholipids, and factor VIIIa. The chain is Coagulation factor IX (F9) from Oryctolagus cuniculus (Rabbit).